Consider the following 212-residue polypeptide: Noggin-2 (212 aa).

Positions 1–23 (MGSITRALPLLLLLLLCAHGTAS) are cleaved as a signal peptide. Residues 37–56 (LPVPDLIENPDPEHDPREQD) are disordered. Residues 47-56 (DPEHDPREQD) show a composition bias toward basic and acidic residues. An N-linked (GlcNAc...) asparagine glycan is attached at Asn-84.

This sequence belongs to the noggin family. Homodimer; disulfide-linked.

It localises to the secreted. In terms of biological role, inhibitor of bone morphogenetic proteins (BMP) signaling. This is Noggin-2 (nog2) from Danio rerio (Zebrafish).